Here is a 216-residue protein sequence, read N- to C-terminus: Ras-related protein Rab-2B (216 aa).

Gly16, Val17, Gly18, Lys19, Ser20, and Cys21 together coordinate GDP. Residues Gly16, Val17, Gly18, Lys19, Ser20, Cys21, and Thr38 each coordinate GTP. Residue Ser20 coordinates Mg(2+). Positions 37–42 (LTIGVE) match the Switch 1 motif. Mg(2+) is bound by residues Thr38 and Asp61. The Switch 2 signature appears at 63 to 72 (AGQESFRSIT). Gly64, Asn119, Lys120, Asp122, Ala150, and Lys151 together coordinate GTP. Asn119 contacts GDP. Residues Asp122, Ala150, and Lys151 each contribute to the GDP site. The segment at 189–216 (PQQSISTSVGPSASQRNSRDIGSNSGCC) is disordered. Phosphoserine is present on Ser202. S-geranylgeranyl cysteine attachment occurs at residues Cys215 and Cys216.

This sequence belongs to the small GTPase superfamily. Rab family. As to quaternary structure, interacts (in GTP-bound form) with GARIN4 (via N-terminus). Interacts (in GTP-bound form) with GARIN5A. Interacts (in GTP-bound form) with GARIN1B. Interacts with VPS39 and VPS41. It depends on Mg(2+) as a cofactor. As to expression, expressed in kidney, prostate, lung, liver, thymus, colon, pancreas, and skeletal muscle, and low levels in placenta. Not detected in heart, brain, spleen, testis, ovary, small intestine and leukocyte.

It localises to the cell membrane. The protein localises to the endoplasmic reticulum membrane. The protein resides in the golgi apparatus membrane. It is found in the cytoplasmic vesicle. Its subcellular location is the secretory vesicle. It localises to the acrosome. The protein localises to the autophagosome membrane. It carries out the reaction GTP + H2O = GDP + phosphate + H(+). Its activity is regulated as follows. Regulated by guanine nucleotide exchange factors (GEFs) which promote the exchange of bound GDP for free GTP, GTPase activating proteins (GAPs) which increase the GTP hydrolysis activity, and GDP dissociation inhibitors (GDIs) which inhibit the dissociation of the nucleotide from the GTPase. Its function is as follows. The small GTPases Rab are key regulators of intracellular membrane trafficking, from the formation of transport vesicles to their fusion with membranes. Rabs cycle between active GTP-bound and inactive GDP-bound states. In their active state, drive transport of vesicular carriers from donor organelles to acceptor organelles to regulate the membrane traffic that maintains organelle identity and morphology. Regulates the compacted morphology of the Golgi. Promotes cytosolic DNA-induced innate immune responses. Regulates IFN responses against DNA viruses by regulating the CGAS-STING signaling axis. Together with RAB2A redundantly required for efficient autophagic flux. In Homo sapiens (Human), this protein is Ras-related protein Rab-2B.